The sequence spans 835 residues: Protein translocase subunit SecA 1 (835 aa).

Residues Gln85, 103–107 (GEGKT), and Asp492 each bind ATP. Positions 788 to 807 (VQGEAVHPSSDGEEAKKKPV) are disordered. Zn(2+) is bound by residues Cys819, Cys821, Cys830, and Cys831.

This sequence belongs to the SecA family. As to quaternary structure, monomer and homodimer. Part of the essential Sec protein translocation apparatus which comprises SecA, SecYEG and auxiliary proteins SecDF. Other proteins may also be involved. The cofactor is Zn(2+).

It is found in the cell membrane. Its subcellular location is the cytoplasm. It catalyses the reaction ATP + H2O + cellular proteinSide 1 = ADP + phosphate + cellular proteinSide 2.. Its function is as follows. Part of the Sec protein translocase complex. Interacts with the SecYEG preprotein conducting channel. Has a central role in coupling the hydrolysis of ATP to the transfer of proteins into and across the cell membrane, serving as an ATP-driven molecular motor driving the stepwise translocation of polypeptide chains across the membrane. This chain is Protein translocase subunit SecA 1, found in Bacillus anthracis.